The chain runs to 405 residues: Polyadenylate-binding protein RBP45B (405 aa).

Over residues 1-19 (MMQQPPPGGILPHHAPPPS) the composition is skewed to pro residues. Residues 1–54 (MMQQPPPGGILPHHAPPPSAQQQYGYQQPYGIAGAAPPPPQMWNPQAAAPPSVQ) form a disordered region. The segment covering 20 to 35 (AQQQYGYQQPYGIAGA) has biased composition (low complexity). RRM domains lie at 62–143 (RTLW…WASL), 155–234 (YTIF…PAAS), and 261–333 (TTVF…WGRS). The segment at 379–405 (GGYQQTPQAGQQPPQQPPQQQQVGFSY) is disordered. The segment covering 380 to 405 (GYQQTPQAGQQPPQQPPQQQQVGFSY) has biased composition (low complexity).

This sequence belongs to the polyadenylate-binding RBP45 family. As to quaternary structure, both isoform 1 and isoform 2 interact with poly(A)+ RNA in nucleus. As to expression, expressed in roots, leaves, stems, flowers, siliques, and seedlings. Present in immature anther tissues (tapetum cells) and mature pollen grains.

It localises to the nucleus. Functionally, heterogeneous nuclear ribonucleoprotein (hnRNP)-protein binding the poly(A) tail of mRNA and probably involved in some steps of pre-mRNA maturation. The polypeptide is Polyadenylate-binding protein RBP45B (RBP45B) (Arabidopsis thaliana (Mouse-ear cress)).